Here is a 33-residue protein sequence, read N- to C-terminus: U1-pseudomyrmecitoxin-Pt1 subunit LS1 (33 aa).

It belongs to the myrmexin family. As to quaternary structure, heterodimer composed of subunit LS1 and subunit SS1 (U1-PSDTX-Pt1b), heterodimer composed of subunit LS1 and SS2 (U1-PSDTX-Pt1b), and heterodimer composed of subunit LS1 and SS3; disulfide-linked. Expressed by the venom gland.

The protein resides in the secreted. Its function is as follows. This heterodimer may have anti-inflammatory properties, since the myrmexin complex (composed of 6 SS-LS heterodimers) inhibits carrageenin-induced edema in a dose-dependent manner (after subcutaneous injection into rats). The protein is U1-pseudomyrmecitoxin-Pt1 subunit LS1 of Pseudomyrmex triplarinus (Ant).